A 437-amino-acid polypeptide reads, in one-letter code: Carboxypeptidase A6 (437 aa).

The first 30 residues, 1-30 (MKCLGKRRGQAAAFLPLCWLFLKILQPGHS), serve as a signal peptide directing secretion. Positions 31–129 (HLYNNRYAGD…SSLHTQRNRR (99 aa)) are cleaved as a propeptide — activation peptide. Residues Asn-89 and Asn-153 are each glycosylated (N-linked (GlcNAc...) asparagine). Positions 138–432 (VYHSLEEIQN…LAVKNITMHL (295 aa)) constitute a Peptidase M14 domain. Positions 196 and 199 each coordinate Zn(2+). Substrate-binding positions include 196 to 199 (HARE), Arg-254, and 271 to 272 (NR). A disulfide bridge connects residues Cys-265 and Cys-288. His-324 contributes to the Zn(2+) binding site. Residues 325-326 (AY) and Tyr-376 contribute to the substrate site. Glu-398 (proton donor/acceptor) is an active-site residue. An N-linked (GlcNAc...) asparagine glycan is attached at Asn-427.

This sequence belongs to the peptidase M14 family. Zn(2+) serves as cofactor. In terms of tissue distribution, expressed in the hippocampus, nucleus raphe, and cortex.

Its subcellular location is the secreted. The protein localises to the extracellular space. The protein resides in the extracellular matrix. In terms of biological role, may be involved in the proteolytic inactivation of enkephalins and neurotensin in some brain areas. May convert inactive angiotensin I into the biologically active angiotensin II. Releases a C-terminal amino acid, with preference for large hydrophobic C-terminal amino acids and shows only very weak activity toward small amino acids and histidine. The chain is Carboxypeptidase A6 (CPA6) from Homo sapiens (Human).